Reading from the N-terminus, the 342-residue chain is tRNA N6-adenosine threonylcarbamoyltransferase (342 aa).

Fe cation-binding residues include His111 and His115. Substrate contacts are provided by residues 134–138 (LVSGG), Asp167, Gly180, and Asn272. Asp300 contacts Fe cation.

Belongs to the KAE1 / TsaD family. The cofactor is Fe(2+).

The protein resides in the cytoplasm. The enzyme catalyses L-threonylcarbamoyladenylate + adenosine(37) in tRNA = N(6)-L-threonylcarbamoyladenosine(37) in tRNA + AMP + H(+). Its function is as follows. Required for the formation of a threonylcarbamoyl group on adenosine at position 37 (t(6)A37) in tRNAs that read codons beginning with adenine. Is involved in the transfer of the threonylcarbamoyl moiety of threonylcarbamoyl-AMP (TC-AMP) to the N6 group of A37, together with TsaE and TsaB. TsaD likely plays a direct catalytic role in this reaction. The polypeptide is tRNA N6-adenosine threonylcarbamoyltransferase (Aromatoleum aromaticum (strain DSM 19018 / LMG 30748 / EbN1) (Azoarcus sp. (strain EbN1))).